The primary structure comprises 624 residues: ERAD-associated E3 ubiquitin-protein ligase ASI1 (624 aa).

Residues 1 to 69 (MNSSTSSENV…SEEIPPTLRS (69 aa)) lie on the Perinuclear space side of the membrane. Asn-2, Asn-19, and Asn-29 each carry an N-linked (GlcNAc...) asparagine glycan. The helical transmembrane segment at 70 to 90 (VFDTIGFFFSPYAIFCFVIAI) threads the bilayer. Residues 91-116 (VLNRFVVFYAVLNNGSRRTLPLWLSN) lie on the Nuclear side of the membrane. The helical transmembrane segment at 117–137 (VFHVSAVVVLAMVSLGPLTLG) threads the bilayer. Residues 138-152 (KDFKILGDPAFAQEK) are Perinuclear space-facing. Residues 153-173 (FLLNIFYAFAYSYCVETIFTI) form a helical membrane-spanning segment. Residues 174 to 209 (MRNSSPLEGTDYSLFELSIQFYTMTNNNTKFLDSPD) lie on the Nuclear side of the membrane. Residues 210–230 (YIIDCSMAILSRILIHLVEIF) form a helical membrane-spanning segment. Residues 231–273 (RLRNYRLLFSTIMNLCHICYLGIRVKQGGWKSLPFSVKFRHFP) lie on the Perinuclear space side of the membrane. Residues 274–294 (KLFSVSIICLSLLIFKLSCLI) traverse the membrane as a helical segment. Residues 295 to 624 (RWDPFGKSRN…CKVHPVSDSK (330 aa)) lie on the Nuclear side of the membrane. The disordered stretch occupies residues 467-490 (TSDDEYSEDYEPSEVESLGDSDEE). Residues 468 to 490 (SDDEYSEDYEPSEVESLGDSDEE) are compositionally biased toward acidic residues. The segment at 568-608 (CAVCKVNERNTVLWPCRCFAICEDCRISLGLRGFSTCVCCR) adopts an RING-type; atypical zinc-finger fold.

As to quaternary structure, component of the Asi complex, which contains ASI1, ASI2 and ASI3. Interacts directly with ASI3. Glycosylation is not required for ASI1 function.

The protein resides in the nucleus inner membrane. The enzyme catalyses S-ubiquitinyl-[E2 ubiquitin-conjugating enzyme]-L-cysteine + [acceptor protein]-L-lysine = [E2 ubiquitin-conjugating enzyme]-L-cysteine + N(6)-ubiquitinyl-[acceptor protein]-L-lysine.. Functionally, E3 ubiquitin-protein ligase which transfers ubiquitin to substrates promoting their degradation. Part of the nuclear inner membrane (INM)-specific branch of the ER-associated degradation (ERAD) pathway, required for the elimination of misfolded proteins in the INM, a specialized ER subdomain. Required for ERG11 degradation. Negative regulator of SPS-sensor signaling. Together with ASI2 and ASI3, prevents the unprocessed precursor forms of STP1 and STP2 that escape cytoplasmic anchoring from inducing SPS-sensor-regulated genes in the absence of inducing signals. Controls amino acid permease (AAP) gene expression in response to amino acid availability, a process mediated by the transcription factors STP1 and STP1. This chain is ERAD-associated E3 ubiquitin-protein ligase ASI1 (ASI1), found in Saccharomyces cerevisiae (strain ATCC 204508 / S288c) (Baker's yeast).